We begin with the raw amino-acid sequence, 295 residues long: Reticulon-like protein 1 (295 aa).

At 1 to 50 the chain is on the cytoplasmic side; it reads MSASAQHSQAQQQQQQKSCNCDLLLWRNPVQTGKYFGGSLLALLILKKVN. The 201-residue stretch at 20–220 folds into the Reticulon domain; it reads NCDLLLWRNP…ISNLVKSKTA (201 aa). The helical transmembrane segment at 51-73 threads the bilayer; the sequence is LITFFLKVAYTILFTTGSIEFVS. At 74-142 the chain is on the lumenal side; the sequence is KLFLGQGLIT…ALFLLHKFFS (69 aa). Residues 143–163 traverse the membrane as a helical segment; it reads WFSIWTIVFVADIFTFTLPVI. At 164-295 the chain is on the cytoplasmic side; that stretch reads YHSYKHEIDA…LQNELEKNNA (132 aa). Thr-186 and Thr-219 each carry phosphothreonine. A compositionally biased stretch (polar residues) spans 219–235; the sequence is TAPVSSTAGPQTASTSK. A disordered region spans residues 219–295; it reads TAPVSSTAGP…LQNELEKNNA (77 aa). A Phosphoserine modification is found at Ser-232. A coiled-coil region spans residues 265–295; it reads STTQEFNVDELSNELKKSTKNLQNELEKNNA.

As to quaternary structure, interacts with POM33.

The protein resides in the endoplasmic reticulum membrane. The sequence is that of Reticulon-like protein 1 (RTN1) from Saccharomyces cerevisiae (strain ATCC 204508 / S288c) (Baker's yeast).